The sequence spans 317 residues: Pantothenate kinase (317 aa).

101-108 contributes to the ATP binding site; the sequence is GSVAVGKS.

Belongs to the prokaryotic pantothenate kinase family.

The protein localises to the cytoplasm. The enzyme catalyses (R)-pantothenate + ATP = (R)-4'-phosphopantothenate + ADP + H(+). It functions in the pathway cofactor biosynthesis; coenzyme A biosynthesis; CoA from (R)-pantothenate: step 1/5. The sequence is that of Pantothenate kinase from Actinobacillus succinogenes (strain ATCC 55618 / DSM 22257 / CCUG 43843 / 130Z).